Here is a 195-residue protein sequence, read N- to C-terminus: Imidazoleglycerol-phosphate dehydratase (195 aa).

The protein belongs to the imidazoleglycerol-phosphate dehydratase family.

It is found in the cytoplasm. It carries out the reaction D-erythro-1-(imidazol-4-yl)glycerol 3-phosphate = 3-(imidazol-4-yl)-2-oxopropyl phosphate + H2O. It functions in the pathway amino-acid biosynthesis; L-histidine biosynthesis; L-histidine from 5-phospho-alpha-D-ribose 1-diphosphate: step 6/9. The chain is Imidazoleglycerol-phosphate dehydratase from Burkholderia multivorans (strain ATCC 17616 / 249).